Consider the following 370-residue polypeptide: tRNA pseudouridine(27/28) synthase (370 aa).

Asp56 acts as the Nucleophile in catalysis. A substrate-binding site is contributed by Tyr111.

This sequence belongs to the tRNA pseudouridine synthase TruA family.

Its subcellular location is the mitochondrion. The catalysed reaction is uridine(27/28) in mitochondrial tRNA = pseudouridine(27/28) in mitochondrial tRNA. Mitochondrial-specific pseudouridine synthase catalyzing the formation of pseudouridine at positions 27 and 28 in the anticodon stem and loop of mitochondrial transfer RNAs. This is tRNA pseudouridine(27/28) synthase (PUS2) from Saccharomyces cerevisiae (strain ATCC 204508 / S288c) (Baker's yeast).